We begin with the raw amino-acid sequence, 666 residues long: DNA ligase (666 aa).

Residues 34–38 (DAEYD), 83–84 (SL), and E114 each bind NAD(+). K116 acts as the N6-AMP-lysine intermediate in catalysis. 4 residues coordinate NAD(+): R137, E171, K286, and K310. Zn(2+) contacts are provided by C404, C407, C422, and C427. The BRCT domain maps to 588–666 (NTESTISEKS…EEFFAILKGE (79 aa)).

This sequence belongs to the NAD-dependent DNA ligase family. LigA subfamily. Mg(2+) serves as cofactor. It depends on Mn(2+) as a cofactor.

The enzyme catalyses NAD(+) + (deoxyribonucleotide)n-3'-hydroxyl + 5'-phospho-(deoxyribonucleotide)m = (deoxyribonucleotide)n+m + AMP + beta-nicotinamide D-nucleotide.. Its function is as follows. DNA ligase that catalyzes the formation of phosphodiester linkages between 5'-phosphoryl and 3'-hydroxyl groups in double-stranded DNA using NAD as a coenzyme and as the energy source for the reaction. It is essential for DNA replication and repair of damaged DNA. In Mesoplasma florum (strain ATCC 33453 / NBRC 100688 / NCTC 11704 / L1) (Acholeplasma florum), this protein is DNA ligase.